A 127-amino-acid chain; its full sequence is ALK and LTK ligand 1 (127 aa).

The signal sequence occupies residues 1–27 (MWLTKPSTPVSALLLLALALSPPGTQG). Intrachain disulfides connect Cys-88–Cys-124 and Cys-102–Cys-111.

Belongs to the ALKAL family.

It is found in the secreted. Its subcellular location is the cell membrane. In terms of biological role, cytokine that acts as a physiological ligand for receptor tyrosine kinase LTK, leading to its activation. Monomeric ALKAL1 binds to LTK, leading to LTK homodimerization and activation. In contrast to ALKAL2, does not act as a potent physiological ligand for ALK. The protein is ALK and LTK ligand 1 of Mus musculus (Mouse).